A 179-amino-acid polypeptide reads, in one-letter code: Ribosome maturation factor RimM (179 aa).

The PRC barrel domain maps to 102–179 (DGEYYWYQLE…EMKVDWDADF (78 aa)).

It belongs to the RimM family. Binds ribosomal protein uS19.

The protein localises to the cytoplasm. In terms of biological role, an accessory protein needed during the final step in the assembly of 30S ribosomal subunit, possibly for assembly of the head region. Essential for efficient processing of 16S rRNA. May be needed both before and after RbfA during the maturation of 16S rRNA. It has affinity for free ribosomal 30S subunits but not for 70S ribosomes. The polypeptide is Ribosome maturation factor RimM (Pseudomonas syringae pv. syringae (strain B728a)).